A 483-amino-acid polypeptide reads, in one-letter code: Protein nucleotidyltransferase YdiU (483 aa).

G100, G102, R103, K123, D135, G136, R189, and R196 together coordinate ATP. D265 serves as the catalytic Proton acceptor. Residues N266 and D275 each coordinate Mg(2+). An ATP-binding site is contributed by D275.

It belongs to the SELO family. Mg(2+) serves as cofactor. Mn(2+) is required as a cofactor.

The catalysed reaction is L-seryl-[protein] + ATP = 3-O-(5'-adenylyl)-L-seryl-[protein] + diphosphate. It catalyses the reaction L-threonyl-[protein] + ATP = 3-O-(5'-adenylyl)-L-threonyl-[protein] + diphosphate. The enzyme catalyses L-tyrosyl-[protein] + ATP = O-(5'-adenylyl)-L-tyrosyl-[protein] + diphosphate. It carries out the reaction L-histidyl-[protein] + UTP = N(tele)-(5'-uridylyl)-L-histidyl-[protein] + diphosphate. The catalysed reaction is L-seryl-[protein] + UTP = O-(5'-uridylyl)-L-seryl-[protein] + diphosphate. It catalyses the reaction L-tyrosyl-[protein] + UTP = O-(5'-uridylyl)-L-tyrosyl-[protein] + diphosphate. Nucleotidyltransferase involved in the post-translational modification of proteins. It can catalyze the addition of adenosine monophosphate (AMP) or uridine monophosphate (UMP) to a protein, resulting in modifications known as AMPylation and UMPylation. In Gloeobacter violaceus (strain ATCC 29082 / PCC 7421), this protein is Protein nucleotidyltransferase YdiU.